A 1477-amino-acid chain; its full sequence is Putative insulin-like peptide receptor (1477 aa).

Positions Met-1 to Ser-24 are cleaved as a signal peptide. The Extracellular portion of the chain corresponds to Ala-25–Leu-980. 13 N-linked (GlcNAc...) asparagine glycosylation sites follow: Asn-55, Asn-255, Asn-300, Asn-325, Asn-457, Asn-491, Asn-549, Asn-644, Asn-732, Asn-791, Asn-874, Asn-895, and Asn-957. Fibronectin type-III domains are found at residues Glu-652–Asp-750 and Asn-780–Ala-869. The Fibronectin type-III 3 domain maps to Leu-880–Leu-971. The helical transmembrane segment at Ile-981–Leu-1001 threads the bilayer. Residues Tyr-1002–Val-1477 are Cytoplasmic-facing. A Protein kinase domain is found at Ile-1044–Val-1315. ATP is bound by residues Leu-1050–Val-1058 and Lys-1077. Asp-1175 serves as the catalytic Proton acceptor. Tyr-1201 bears the Phosphotyrosine; by autocatalysis mark. 2 disordered regions span residues Tyr-1350 to Glu-1376 and Lys-1391 to Cys-1421. A compositionally biased stretch (polar residues) spans Asn-1356 to Lys-1368. Over residues Lys-1403–Arg-1412 the composition is skewed to basic residues.

This sequence belongs to the protein kinase superfamily. Tyr protein kinase family. Insulin receptor subfamily. Mn(2+) serves as cofactor. As to expression, expressed in dividing epithelial cells.

It is found in the membrane. The enzyme catalyses L-tyrosyl-[protein] + ATP = O-phospho-L-tyrosyl-[protein] + ADP + H(+). This receptor probably binds an insulin related protein and has a tyrosine-protein kinase activity. The chain is Putative insulin-like peptide receptor (HTK7) from Hydra vulgaris (Hydra).